The primary structure comprises 222 residues: Abasic site processing protein YedK (222 aa).

C2 serves as the catalytic Nucleophile. Position 2 is a thiazolidine linkage to a ring-opened DNA abasic site (C2). E105 is a catalytic residue.

This sequence belongs to the SOS response-associated peptidase family.

Formation and reversal of DNA-protein cross-link depends on DNA context. Catalyzes formation of the thiazolidine linkage in presence of abasic sites in single-stranded DNA. Mediates the reversal of the thiazolidine cross-link in presence of double stranded DNA. Its function is as follows. Sensor of abasic sites in single-stranded DNA (ssDNA) required to preserve genome integrity by promoting error-free repair of abasic sites. Recognizes and binds abasic sites in ssDNA at replication forks and chemically modifies the lesion by forming a covalent cross-link with DNA: forms a stable thiazolidine linkage between a ring-opened abasic site and the alpha-amino and sulfhydryl substituents of its N-terminal catalytic cysteine residue. The DNA-protein cross-link is then reversed: able to catalyze the reversal of the thiazolidine cross-link and cycle between a cross-link and a non-cross-linked state depending on DNA context: mediates self-reversal of the thiazolidine cross-link in double stranded DNA. May act as a protease: mediates autocatalytic processing of its N-terminal methionine in order to expose the catalytic cysteine. This is Abasic site processing protein YedK from Escherichia coli (strain K12).